We begin with the raw amino-acid sequence, 295 residues long: Probable aspartoacylase (295 aa).

Zn(2+) contacts are provided by His-13 and Glu-16. Residues Arg-54 and 61–62 (NR) each bind substrate. Residue His-100 participates in Zn(2+) binding. Substrate contacts are provided by Glu-158 and Tyr-268.

Belongs to the AspA/AstE family. Aspartoacylase subfamily. The cofactor is Zn(2+).

The catalysed reaction is an N-acyl-L-aspartate + H2O = a carboxylate + L-aspartate. In Prochlorococcus marinus subsp. pastoris (strain CCMP1986 / NIES-2087 / MED4), this protein is Probable aspartoacylase.